Consider the following 227-residue polypeptide: Small ribosomal subunit protein uS5 (227 aa).

Residues 1 to 22 (MSKRSNRSNNKNNTNKFNIENW) form a disordered region. A compositionally biased stretch (low complexity) spans 7–18 (RSNNKNNTNKFN). The S5 DRBM domain maps to 63 to 126 (LEEEVMDVNL…DAAKYNLIKV (64 aa)).

Belongs to the universal ribosomal protein uS5 family. Part of the 30S ribosomal subunit. Contacts protein S4.

In terms of biological role, with S4 and S12 plays an important role in translational accuracy. In Methanosphaera stadtmanae (strain ATCC 43021 / DSM 3091 / JCM 11832 / MCB-3), this protein is Small ribosomal subunit protein uS5.